The primary structure comprises 99 residues: Aspartyl/glutamyl-tRNA(Asn/Gln) amidotransferase subunit C (99 aa).

This sequence belongs to the GatC family. Heterotrimer of A, B and C subunits.

The catalysed reaction is L-glutamyl-tRNA(Gln) + L-glutamine + ATP + H2O = L-glutaminyl-tRNA(Gln) + L-glutamate + ADP + phosphate + H(+). The enzyme catalyses L-aspartyl-tRNA(Asn) + L-glutamine + ATP + H2O = L-asparaginyl-tRNA(Asn) + L-glutamate + ADP + phosphate + 2 H(+). Its function is as follows. Allows the formation of correctly charged Asn-tRNA(Asn) or Gln-tRNA(Gln) through the transamidation of misacylated Asp-tRNA(Asn) or Glu-tRNA(Gln) in organisms which lack either or both of asparaginyl-tRNA or glutaminyl-tRNA synthetases. The reaction takes place in the presence of glutamine and ATP through an activated phospho-Asp-tRNA(Asn) or phospho-Glu-tRNA(Gln). The sequence is that of Aspartyl/glutamyl-tRNA(Asn/Gln) amidotransferase subunit C from Rhodococcus opacus (strain B4).